The chain runs to 306 residues: MTEADMLFSVTVPGSTANLGPGFDSVGMALSRYLRLSVFPHDEWRFEAETEVVAGIPEGTDNLIYQVAKRTAAHFGKELPPSLVKVWSDIPLARGLGSSAAAIAAAVELANELADLKLSDREKLHFASLEEGHPDNAGASLFGGLVIGLHEEDETEMVSMKDIDLDVVVVIPFYEVLTKDARDVLPESLSYPKAVEASAVSNMLVAGLMAKDWKLVGRMMQKDLFHQPYRRALVPELSKVEHEAGQNGAFGTALSGAGPTILSFIEKGKGEALRNQLASKFPHCEVDCLYVPDTGIIVERKSVNSV.

91-101 serves as a coordination point for ATP; the sequence is PLARGLGSSAA.

Belongs to the GHMP kinase family. Homoserine kinase subfamily.

The protein localises to the cytoplasm. It carries out the reaction L-homoserine + ATP = O-phospho-L-homoserine + ADP + H(+). It participates in amino-acid biosynthesis; L-threonine biosynthesis; L-threonine from L-aspartate: step 4/5. Its function is as follows. Catalyzes the ATP-dependent phosphorylation of L-homoserine to L-homoserine phosphate. The protein is Homoserine kinase of Bacillus licheniformis (strain ATCC 14580 / DSM 13 / JCM 2505 / CCUG 7422 / NBRC 12200 / NCIMB 9375 / NCTC 10341 / NRRL NRS-1264 / Gibson 46).